A 238-amino-acid chain; its full sequence is ATP synthase subunit a (238 aa).

A run of 7 helical transmembrane segments spans residues serine 35–threonine 55, valine 61–valine 81, phenylalanine 94–leucine 114, alanine 128–isoleucine 148, phenylalanine 151–leucine 171, isoleucine 190–leucine 210, and phenylalanine 211–lysine 231.

This sequence belongs to the ATPase A chain family. In terms of assembly, F-type ATPases have 2 components, CF(1) - the catalytic core - and CF(0) - the membrane proton channel. CF(1) has five subunits: alpha(3), beta(3), gamma(1), delta(1), epsilon(1). CF(0) has three main subunits: a(1), b(2) and c(9-12). The alpha and beta chains form an alternating ring which encloses part of the gamma chain. CF(1) is attached to CF(0) by a central stalk formed by the gamma and epsilon chains, while a peripheral stalk is formed by the delta and b chains.

It is found in the cell inner membrane. Its function is as follows. Key component of the proton channel; it plays a direct role in the translocation of protons across the membrane. The protein is ATP synthase subunit a of Solidesulfovibrio magneticus (strain ATCC 700980 / DSM 13731 / RS-1) (Desulfovibrio magneticus).